A 459-amino-acid chain; its full sequence is tRNA modification GTPase MnmE (459 aa).

Positions 22, 85, and 124 each coordinate (6S)-5-formyl-5,6,7,8-tetrahydrofolate. The region spanning 221 to 380 is the TrmE-type G domain; it reads GLSTVIVGRP…LEIQIKDLFF (160 aa). Residue Asn231 participates in K(+) binding. Residues 231-236, 250-256, and 275-278 each bind GTP; these read NVGKSS, TEVAGTT, and DTAG. Ser235 lines the Mg(2+) pocket. K(+) is bound by residues Thr250, Val252, and Thr255. Thr256 contacts Mg(2+). Residue Lys459 participates in (6S)-5-formyl-5,6,7,8-tetrahydrofolate binding.

It belongs to the TRAFAC class TrmE-Era-EngA-EngB-Septin-like GTPase superfamily. TrmE GTPase family. Homodimer. Heterotetramer of two MnmE and two MnmG subunits. Requires K(+) as cofactor.

It is found in the cytoplasm. In terms of biological role, exhibits a very high intrinsic GTPase hydrolysis rate. Involved in the addition of a carboxymethylaminomethyl (cmnm) group at the wobble position (U34) of certain tRNAs, forming tRNA-cmnm(5)s(2)U34. The sequence is that of tRNA modification GTPase MnmE from Staphylococcus epidermidis (strain ATCC 35984 / DSM 28319 / BCRC 17069 / CCUG 31568 / BM 3577 / RP62A).